The primary structure comprises 198 residues: Translation initiation factor IF-3 (198 aa).

The disordered stretch occupies residues 168 to 198; it reads SLAPKKAGSPKKAETDTAKKENPKKAVETKE. Basic and acidic residues predominate over residues 178-198; the sequence is KKAETDTAKKENPKKAVETKE.

This sequence belongs to the IF-3 family. As to quaternary structure, monomer.

Its subcellular location is the cytoplasm. In terms of biological role, IF-3 binds to the 30S ribosomal subunit and shifts the equilibrium between 70S ribosomes and their 50S and 30S subunits in favor of the free subunits, thus enhancing the availability of 30S subunits on which protein synthesis initiation begins. The protein is Translation initiation factor IF-3 of Phocaeicola vulgatus (strain ATCC 8482 / DSM 1447 / JCM 5826 / CCUG 4940 / NBRC 14291 / NCTC 11154) (Bacteroides vulgatus).